A 567-amino-acid chain; its full sequence is Zinc finger protein 512 (567 aa).

Residues Met1–Arg32 are disordered. A compositionally biased stretch (polar residues) spans Ser12–Thr23. Glycyl lysine isopeptide (Lys-Gly) (interchain with G-Cter in SUMO2) cross-links involve residues Lys18 and Lys84. A disordered region spans residues Ala86–Pro148. Over residues Lys119 to Pro130 the composition is skewed to basic residues. The C2H2-type 1 zinc-finger motif lies at Phe197–His220. Lys227 is covalently cross-linked (Glycyl lysine isopeptide (Lys-Gly) (interchain with G-Cter in SUMO2)). A C2H2-type 2 zinc finger spans residues Leu287–His310. Residue Lys333 forms a Glycyl lysine isopeptide (Lys-Gly) (interchain with G-Cter in SUMO2) linkage. The C2H2-type 3; atypical zinc finger occupies Ile406–Cys430. The C2H2-type 4 zinc finger occupies Tyr440–His463. The segment at Gln486–Lys567 is disordered. Basic residues predominate over residues Arg495 to Gln508. Basic and acidic residues predominate over residues Val523 to Glu532. Residues Lys556–Lys567 are compositionally biased toward basic residues.

It belongs to the krueppel C2H2-type zinc-finger protein family.

The protein localises to the nucleus. May be involved in transcriptional regulation. This Pongo abelii (Sumatran orangutan) protein is Zinc finger protein 512 (ZNF512).